A 233-amino-acid chain; its full sequence is Large ribosomal subunit protein uL1 (233 aa).

It belongs to the universal ribosomal protein uL1 family. As to quaternary structure, part of the 50S ribosomal subunit.

In terms of biological role, binds directly to 23S rRNA. The L1 stalk is quite mobile in the ribosome, and is involved in E site tRNA release. Protein L1 is also a translational repressor protein, it controls the translation of the L11 operon by binding to its mRNA. The chain is Large ribosomal subunit protein uL1 from Geotalea uraniireducens (strain Rf4) (Geobacter uraniireducens).